Consider the following 285-residue polypeptide: Transcription factor E2F6 (285 aa).

A Glycyl lysine isopeptide (Lys-Gly) (interchain with G-Cter in SUMO2) cross-link involves residue K9. A DNA-binding region spans residues 50–129 (YVSMRKALKV…SKNHIRWIGS (80 aa)). A DEF box motif is present at residues 95–129 (KLGVRKRRVYDITNVLDGIDLVEKKSKNHIRWIGS). A dimerization region spans residues 130–222 (DLSNFGAVPQ…PAPKEDSITV (93 aa)). Residues 143–164 (LQEELSDLSAMEDALDELIKDC) form a leucine-zipper region. Residues 173–285 (DDKENERLAY…QSEEVLEVSN (113 aa)) form a transcription repression region. The segment at 240 to 285 (QGSHSSNKTSDNVGTSSSKSKPLEHPQPEKEENPPQQSEEVLEVSN) is disordered. Residues 241 to 259 (GSHSSNKTSDNVGTSSSKS) show a composition bias toward polar residues. The span at 260-272 (KPLEHPQPEKEEN) shows a compositional bias: basic and acidic residues.

Belongs to the E2F/DP family. In terms of assembly, forms heterodimers with DP family members TFDP1 or TFDP2. Component of the DRTF1/E2F transcription factor complex. Part of the E2F6.com-1 complex in G0 phase composed of E2F6, MGA, MAX, TFDP1, CBX3, BAT8, EUHMTASE1, RING1, RNF2, MBLR, L3MBTL2 and YAF2. Component of some MLL1/MLL complex, at least composed of the core components KMT2A/MLL1, ASH2L, HCFC1/HCF1, WDR5 and RBBP5, as well as the facultative components BACC1, CHD8, E2F6, HSP70, INO80C, KANSL1, LAS1L, MAX, MCRS1, MGA, KAT8/MOF, PELP1, PHF20, PRP31, RING2, RUVB1/TIP49A, RUVB2/TIP49B, SENP3, TAF1, TAF4, TAF6, TAF7, TAF9 and TEX10.

It localises to the nucleus. Its function is as follows. Inhibitor of E2F-dependent transcription. Binds DNA cooperatively with DP proteins through the E2 recognition site, 5'-TTTC[CG]CGC-3'. Has a preference for the 5'-TTTCCCGC-3' E2F recognition site. E2F6 lacks the transcriptional activation and pocket protein binding domains. Appears to regulate a subset of E2F-dependent genes whose products are required for entry into the cell cycle but not for normal cell cycle progression. Represses expression of some meiosis-specific genes, including SLC25A31/ANT4. May silence expression via the recruitment of a chromatin remodeling complex containing histone H3-K9 methyltransferase activity. Overexpression delays the exit of cells from the S-phase. This chain is Transcription factor E2F6, found in Bos taurus (Bovine).